We begin with the raw amino-acid sequence, 117 residues long: Ig heavy chain V region J558 (117 aa).

An Ig-like domain is found at 1-116 (EVQLQQSGPE…WGAGTTVTVS (116 aa)). Residues Cys-22 and Cys-96 are joined by a disulfide bond.

This is Ig heavy chain V region J558 from Mus musculus (Mouse).